The sequence spans 604 residues: MAESKGSTSKEGFGDWCILEAECSDVENDLEKLFDEDTDSDISDLLDDNDLEQGNSRELFHQQECQESEEHLQKLKRKYLSPKAVAQLSPRFESISLSPQQKSKRRLFAEQDSGLELTLTNEAEDVSSEVEVPALDSQPVAGEQSGDIDIHFTALLRANNNRAILMAKFKEAFGVGFYDLTRQFKSYKTCCNAWVISVYAVHDDLLESSKQLLQQHCDYVWIRQTAAMSLFLLCFKVGKNRGTVHKLMMSMLNVHEKQILSEPPKLRNTAAALFWYKGCMGSGGFTYGPYPDWIAQQTILGHQNAEASSFDLSEMIQWAFDNNHMDESDIAYQYAKLAPENSNAVAWLAHNNQARFVRECAAMVRFYKKGQMKEMSMSEWIYARIHEVDGEGHWSTIAKFLRYQQVNFIMFLAALKDLLHAVPKRNCILIYGPPNTGKSAFTMSLIRVLKGRVISFVNSKSQFWLQPLSECKIALLDDVTDPCWIYMDTYLRNGLDGHVVSLDCKHKAPIQTKFPALLLTSNINVHNEVNYRYLHSRIQGFEFPNPFPMKADNTPQFELTDQSWKSFFTRLWQQLELSDHEEEGENGESQRTFQCSTRSANEHL.

The Nuclear localization signal motif lies at 76-78 (KRK). A phosphoserine; by host mark is found at Ser-81 and Ser-89. A DNA-binding region region spans residues 144–307 (QSGDIDIHFT…TILGHQNAEA (164 aa)). The region spanning 406–556 (VNFIMFLAAL…FPMKADNTPQ (151 aa)) is the SF3 helicase domain. An ATP-binding site is contributed by 432–439 (GPPNTGKS). Residue Lys-513 forms a Glycyl lysine isopeptide (Lys-Gly) (interchain with G-Cter in SUMO) linkage. The segment at 579–604 (DHEEEGENGESQRTFQCSTRSANEHL) is disordered. A compositionally biased stretch (polar residues) spans 587-604 (GESQRTFQCSTRSANEHL).

The protein belongs to the papillomaviridae E1 protein family. In terms of assembly, can form hexamers. Interacts with E2 protein; this interaction increases E1 DNA binding specificity. Interacts with host DNA polymerase subunit POLA2. Interacts with host single stranded DNA-binding protein RPA1. Interacts with host TOP1; this interaction stimulates the enzymatic activity of TOP1. Phosphorylated. Post-translationally, sumoylated.

Its subcellular location is the host nucleus. It carries out the reaction Couples ATP hydrolysis with the unwinding of duplex DNA by translocating in the 3'-5' direction.. The catalysed reaction is ATP + H2O = ADP + phosphate + H(+). Functionally, ATP-dependent DNA 3'-5' helicase required for initiation of viral DNA replication. It forms a complex with the viral E2 protein. The E1-E2 complex binds to the replication origin which contains binding sites for both proteins. During the initial step, a dimer of E1 interacts with a dimer of protein E2 leading to a complex that binds the viral origin of replication with high specificity. Then, a second dimer of E1 displaces the E2 dimer in an ATP-dependent manner to form the E1 tetramer. Following this, two E1 monomers are added to each half of the site, which results in the formation of two E1 trimers on the viral ori. Subsequently, two hexamers will be created. The double hexamer acts as a bi-directional helicase machinery and unwinds the viral DNA and then recruits the host DNA polymerase to start replication. This is Replication protein E1 from Homo sapiens (Human).